The sequence spans 146 residues: Large ribosomal subunit protein uL15 (146 aa).

The interval 1–58 is disordered; the sequence is MKLNELSPPKGARTARKRKGRGPGSGLGKTAGKGHKGQKARSGGGVRPGFEGGQMPVH. 2 stretches are compositionally biased toward gly residues: residues 22-31 and 42-52; these read GPGSGLGKTA and SGGGVRPGFEG.

This sequence belongs to the universal ribosomal protein uL15 family. As to quaternary structure, part of the 50S ribosomal subunit.

In terms of biological role, binds to the 23S rRNA. This Desulfatibacillum aliphaticivorans protein is Large ribosomal subunit protein uL15.